Here is a 317-residue protein sequence, read N- to C-terminus: Olfactory receptor 51Q1 (317 aa).

At 1–27 (MSQVTNTTQEGIYFILTDIPGFEASHI) the chain is on the extracellular side. Asn-6 carries N-linked (GlcNAc...) asparagine glycosylation. Residues 28 to 48 (WISIPVCCLYTISIMGNTTIL) traverse the membrane as a helical segment. The Cytoplasmic portion of the chain corresponds to 49-56 (TVIRTEPS). Residues 57–77 (VHQRMYLFLSMLALTDLGLTL) form a helical membrane-spanning segment. At 78 to 101 (TTLPTVMQLLWFNVRRISSEACFA) the chain is on the extracellular side. Cys-99 and Cys-191 form a disulfide bridge. A helical membrane pass occupies residues 102-122 (QFFFLHGFSFMESSVLLAMSV). The Cytoplasmic portion of the chain corresponds to 123-141 (DCYVAICCPLHYASILTNE). The helical transmembrane segment at 142-162 (VIGRTGLAIICCCVLAVLPSL) threads the bilayer. Over 163 to 198 (FLLKRLPFCHSHLLSRSYCLHQDMIRLVCADIRLNS) the chain is Extracellular. A helical transmembrane segment spans residues 199–219 (WYGFALALLIIIVDPLLIVIS). At 220–239 (YTLILKNILGTATWAERLRA) the chain is on the cytoplasmic side. The helical transmembrane segment at 240–260 (LNNCLSHILAVLVLYIPMVGV) threads the bilayer. Topologically, residues 261–275 (SMTHRFAKHASPLVH) are extracellular. The helical transmembrane segment at 276–296 (VIMANIYLLAPPVMNPIIYSV) threads the bilayer. The Cytoplasmic segment spans residues 297–317 (KNKQIQWGMLNFLSLKNMHSR).

It belongs to the G-protein coupled receptor 1 family.

Its subcellular location is the cell membrane. In terms of biological role, odorant receptor. This is Olfactory receptor 51Q1 (OR51Q1) from Homo sapiens (Human).